A 212-amino-acid polypeptide reads, in one-letter code: MVCGGFTCSKNALCALNVVYMLVGVLLIIVAAWGKGFGIVSSIHIIGGVIAIGVFLLLIAIIGLIGAVSHHQVMLFIYMVVLILVFIFQFIVSCSCLAMNRSQQEYLLNTTWNRMSNETRLNLEKTLDCCGFLNTTEGRDEFKQDVALCIQVCSDPHKCPSCGDKMLNHADEALKILGGVGLFFSFTEILGVWLAFRYRNQKDPRANPSAFL.

Residues 1–12 lie on the Cytoplasmic side of the membrane; that stretch reads MVCGGFTCSKNA. A helical membrane pass occupies residues 13–33; it reads LCALNVVYMLVGVLLIIVAAW. At 34–44 the chain is on the extracellular side; sequence GKGFGIVSSIH. A helical membrane pass occupies residues 45 to 65; that stretch reads IIGGVIAIGVFLLLIAIIGLI. The Cytoplasmic segment spans residues 66–72; it reads GAVSHHQ. Residues 73 to 93 form a helical membrane-spanning segment; that stretch reads VMLFIYMVVLILVFIFQFIVS. Over 94–175 the chain is Extracellular; that stretch reads CSCLAMNRSQ…MLNHADEALK (82 aa). 4 N-linked (GlcNAc...) asparagine glycosylation sites follow: Asn100, Asn109, Asn117, and Asn134. A helical transmembrane segment spans residues 176 to 196; that stretch reads ILGGVGLFFSFTEILGVWLAF. Topologically, residues 197–212 are cytoplasmic; sequence RYRNQKDPRANPSAFL.

The protein belongs to the tetraspanin (TM4SF) family.

The protein resides in the membrane. The protein is Tetraspanin-31-B (tspan31-b) of Xenopus laevis (African clawed frog).